Here is a 122-residue protein sequence, read N- to C-terminus: Small ribosomal subunit protein uS13 (122 aa).

Residues 95–122 (GLPVRGQRTHTNARTRKGKAKPIAGKKK) are disordered.

This sequence belongs to the universal ribosomal protein uS13 family. In terms of assembly, part of the 30S ribosomal subunit. Forms a loose heterodimer with protein S19. Forms two bridges to the 50S subunit in the 70S ribosome.

Its function is as follows. Located at the top of the head of the 30S subunit, it contacts several helices of the 16S rRNA. In the 70S ribosome it contacts the 23S rRNA (bridge B1a) and protein L5 of the 50S subunit (bridge B1b), connecting the 2 subunits; these bridges are implicated in subunit movement. Contacts the tRNAs in the A and P-sites. The sequence is that of Small ribosomal subunit protein uS13 from Zymomonas mobilis subsp. mobilis (strain ATCC 31821 / ZM4 / CP4).